The chain runs to 64 residues: Large ribosomal subunit protein bL35 (64 aa).

The protein belongs to the bacterial ribosomal protein bL35 family.

The chain is Large ribosomal subunit protein bL35 from Vibrio campbellii (strain ATCC BAA-1116).